A 484-amino-acid chain; its full sequence is UDP-N-acetylmuramate--L-alanine ligase (484 aa).

128–134 (GTHGKTT) lines the ATP pocket.

The protein belongs to the MurCDEF family.

It is found in the cytoplasm. The enzyme catalyses UDP-N-acetyl-alpha-D-muramate + L-alanine + ATP = UDP-N-acetyl-alpha-D-muramoyl-L-alanine + ADP + phosphate + H(+). It participates in cell wall biogenesis; peptidoglycan biosynthesis. Functionally, cell wall formation. The sequence is that of UDP-N-acetylmuramate--L-alanine ligase from Shewanella loihica (strain ATCC BAA-1088 / PV-4).